A 216-amino-acid chain; its full sequence is Large ribosomal subunit protein uL3 (216 aa).

The interval Phe-132–Pro-157 is disordered.

This sequence belongs to the universal ribosomal protein uL3 family. As to quaternary structure, part of the 50S ribosomal subunit. Forms a cluster with proteins L14 and L19.

Functionally, one of the primary rRNA binding proteins, it binds directly near the 3'-end of the 23S rRNA, where it nucleates assembly of the 50S subunit. This Saccharopolyspora erythraea (strain ATCC 11635 / DSM 40517 / JCM 4748 / NBRC 13426 / NCIMB 8594 / NRRL 2338) protein is Large ribosomal subunit protein uL3.